The primary structure comprises 254 residues: Triosephosphate isomerase (254 aa).

Position 9–11 (9–11 (NWK)) interacts with substrate. H96 serves as the catalytic Electrophile. E169 serves as the catalytic Proton acceptor. Residues G175, S215, and 236–237 (GG) each bind substrate.

Belongs to the triosephosphate isomerase family. In terms of assembly, homodimer.

Its subcellular location is the cytoplasm. It carries out the reaction D-glyceraldehyde 3-phosphate = dihydroxyacetone phosphate. It participates in carbohydrate biosynthesis; gluconeogenesis. Its pathway is carbohydrate degradation; glycolysis; D-glyceraldehyde 3-phosphate from glycerone phosphate: step 1/1. Functionally, involved in the gluconeogenesis. Catalyzes stereospecifically the conversion of dihydroxyacetone phosphate (DHAP) to D-glyceraldehyde-3-phosphate (G3P). The protein is Triosephosphate isomerase of Borrelia hermsii (strain HS1 / DAH).